The sequence spans 490 residues: Glutamate--tRNA ligase (490 aa).

The 'HIGH' region signature appears at 13–23; the sequence is PSPTGTPHVGL. The 'KMSKS' region signature appears at 257 to 261; it reads KLSKR. ATP is bound at residue Lys260.

This sequence belongs to the class-I aminoacyl-tRNA synthetase family. Glutamate--tRNA ligase type 1 subfamily. Monomer.

The protein localises to the cytoplasm. The enzyme catalyses tRNA(Glu) + L-glutamate + ATP = L-glutamyl-tRNA(Glu) + AMP + diphosphate. In terms of biological role, catalyzes the attachment of glutamate to tRNA(Glu) in a two-step reaction: glutamate is first activated by ATP to form Glu-AMP and then transferred to the acceptor end of tRNA(Glu). The polypeptide is Glutamate--tRNA ligase (Mycobacterium tuberculosis (strain ATCC 25177 / H37Ra)).